The primary structure comprises 122 residues: Co-chaperonin GroES (122 aa).

Belongs to the GroES chaperonin family. As to quaternary structure, heptamer of 7 subunits arranged in a ring. Interacts with the chaperonin GroEL.

It is found in the cytoplasm. Its function is as follows. Together with the chaperonin GroEL, plays an essential role in assisting protein folding. The GroEL-GroES system forms a nano-cage that allows encapsulation of the non-native substrate proteins and provides a physical environment optimized to promote and accelerate protein folding. GroES binds to the apical surface of the GroEL ring, thereby capping the opening of the GroEL channel. The chain is Co-chaperonin GroES from Aquifex aeolicus (strain VF5).